The sequence spans 153 residues: 6,7-dimethyl-8-ribityllumazine synthase (153 aa).

5-amino-6-(D-ribitylamino)uracil is bound by residues Phe-22, 56–58 (AFE), and 80–82 (AVI). 85 to 86 (ST) provides a ligand contact to (2S)-2-hydroxy-3-oxobutyl phosphate. His-88 serves as the catalytic Proton donor. Residue Phe-113 participates in 5-amino-6-(D-ribitylamino)uracil binding. Position 127 (Arg-127) interacts with (2S)-2-hydroxy-3-oxobutyl phosphate.

This sequence belongs to the DMRL synthase family.

The enzyme catalyses (2S)-2-hydroxy-3-oxobutyl phosphate + 5-amino-6-(D-ribitylamino)uracil = 6,7-dimethyl-8-(1-D-ribityl)lumazine + phosphate + 2 H2O + H(+). It participates in cofactor biosynthesis; riboflavin biosynthesis; riboflavin from 2-hydroxy-3-oxobutyl phosphate and 5-amino-6-(D-ribitylamino)uracil: step 1/2. In terms of biological role, catalyzes the formation of 6,7-dimethyl-8-ribityllumazine by condensation of 5-amino-6-(D-ribitylamino)uracil with 3,4-dihydroxy-2-butanone 4-phosphate. This is the penultimate step in the biosynthesis of riboflavin. The chain is 6,7-dimethyl-8-ribityllumazine synthase from Clostridium novyi (strain NT).